Consider the following 421-residue polypeptide: Serine hydroxymethyltransferase (421 aa).

Residues Leu121 and 125 to 127 each bind (6S)-5,6,7,8-tetrahydrofolate; that span reads GHL. Lys229 carries the post-translational modification N6-(pyridoxal phosphate)lysine.

It belongs to the SHMT family. As to quaternary structure, homodimer. The cofactor is pyridoxal 5'-phosphate.

It is found in the cytoplasm. It carries out the reaction (6R)-5,10-methylene-5,6,7,8-tetrahydrofolate + glycine + H2O = (6S)-5,6,7,8-tetrahydrofolate + L-serine. It functions in the pathway one-carbon metabolism; tetrahydrofolate interconversion. Its pathway is amino-acid biosynthesis; glycine biosynthesis; glycine from L-serine: step 1/1. Its function is as follows. Catalyzes the reversible interconversion of serine and glycine with tetrahydrofolate (THF) serving as the one-carbon carrier. This reaction serves as the major source of one-carbon groups required for the biosynthesis of purines, thymidylate, methionine, and other important biomolecules. Also exhibits THF-independent aldolase activity toward beta-hydroxyamino acids, producing glycine and aldehydes, via a retro-aldol mechanism. The polypeptide is Serine hydroxymethyltransferase (Haemophilus influenzae (strain PittEE)).